The following is a 175-amino-acid chain: Large ribosomal subunit protein uL15 (175 aa).

Disordered stretches follow at residues Met-1–Phe-65 and Pro-155–Ala-175. The segment covering Arg-12 to Gly-21 has biased composition (basic residues). Gly residues predominate over residues Arg-22–Gly-38. Low complexity predominate over residues Lys-160–Ala-169.

Belongs to the universal ribosomal protein uL15 family. As to quaternary structure, part of the 50S ribosomal subunit.

Its function is as follows. Binds to the 23S rRNA. In Myxococcus xanthus (strain DK1622), this protein is Large ribosomal subunit protein uL15.